The sequence spans 511 residues: MHTEKDPNKNTPEQQTPISLNDQMQRRLEERQQLMEAGVNPYPTHFEVTHSSGEIIANFVEEAKTPVSVAGRIMTIRKMGKASFFHLQDSAGRIQIYMKKDEVGDATYDTFKLLDIGDIIGIKGFTFKTRTGEISVHAESLELLTKSLRPIPVAKEKEVDGEKVVFDAFSDKELRYRQRYVDLIVNPEVKETFIKRSAIVSFMRNAFTGKGWLEVETPILQPIYGGAAARPFTTHHNALDMQLYLRIANELYLKRLIVGGFDGVFEFAKDFRNEGIDRFHNPEFTQVELYVAYKDYNWMMEMVEELFSQTALAVNKSEVTTFLGNEISLKPPFRRLSIIDAITEYTGQNIAGQSEEQLRYTAKDLGLELDPKISSGKIIDEIFGEFVEPKLIQPTFIIDYPTEMSPLAKEHPSQPGIVERFELIIGGKEVCNSFSELNDPVIQRERLESQAKLRQRGDEEAMIVDEDFLRAIEYGMPPCAGIGIGIDRLVMILTGQDSIREVIFFPHLKPE.

Residues Met-1–Asn-21 form a disordered region. A compositionally biased stretch (polar residues) spans Lys-9–Asn-21. Mg(2+)-binding residues include Glu-422 and Glu-429.

It belongs to the class-II aminoacyl-tRNA synthetase family. As to quaternary structure, homodimer. Mg(2+) serves as cofactor.

Its subcellular location is the cytoplasm. The catalysed reaction is tRNA(Lys) + L-lysine + ATP = L-lysyl-tRNA(Lys) + AMP + diphosphate. The sequence is that of Lysine--tRNA ligase from Pelodictyon phaeoclathratiforme (strain DSM 5477 / BU-1).